The sequence spans 110 residues: Iron-sulfur cluster assembly protein CyaY (110 aa).

It belongs to the frataxin family.

Its function is as follows. Involved in iron-sulfur (Fe-S) cluster assembly. May act as a regulator of Fe-S biogenesis. The sequence is that of Iron-sulfur cluster assembly protein CyaY from Paracidovorax citrulli (strain AAC00-1) (Acidovorax citrulli).